A 122-amino-acid polypeptide reads, in one-letter code: uncharacterized protein (122 aa).

The N-terminal stretch at 1–33 (MASTVAGLSMSAESLRLPLLIGVSSGMLSVSDA) is a signal peptide.

This is an uncharacterized protein from Saccharomyces cerevisiae (strain ATCC 204508 / S288c) (Baker's yeast).